The primary structure comprises 163 residues: Disulfide bond formation protein B 1 (163 aa).

Residues 1-9 (MPLASPRQL) lie on the Cytoplasmic side of the membrane. Residues 10–26 (FLLAFLACVAIMGGALY) traverse the membrane as a helical segment. The Periplasmic portion of the chain corresponds to 27-44 (LEHVVGLEACPLCVVQRI). Cys-36 and Cys-39 are oxidised to a cystine. The helical transmembrane segment at 45-61 (FFILIGLTCLAGAIQGP) threads the bilayer. The Cytoplasmic portion of the chain corresponds to 62–67 (GLRGRR). The helical transmembrane segment at 68–85 (IYSVLVFLLALGGGATAA) threads the bilayer. Topologically, residues 86 to 142 (RQVWLQTVPLDQLPACLPSLDYMMQALPFQEVIRLVLHGTADCAQVSWTLFTLSIPE) are periplasmic. A disulfide bond links Cys-101 and Cys-128. Residues 143 to 161 (WSLLAFVAYLGFSIVQFLR) form a helical membrane-spanning segment. At 162–163 (RA) the chain is on the cytoplasmic side.

The protein belongs to the DsbB family.

It localises to the cell inner membrane. Functionally, required for disulfide bond formation in some periplasmic proteins. Acts by oxidizing the DsbA protein. The polypeptide is Disulfide bond formation protein B 1 (dsbB1) (Pseudomonas aeruginosa (strain ATCC 15692 / DSM 22644 / CIP 104116 / JCM 14847 / LMG 12228 / 1C / PRS 101 / PAO1)).